Here is a 521-residue protein sequence, read N- to C-terminus: Putative FNIP repeat-containing protein L162 (521 aa).

FNIP repeat units lie at residues 179 to 221 (FNKS…LGYK) and 222 to 263 (YNYP…MGGR).

This is Putative FNIP repeat-containing protein L162 from Acanthamoeba polyphaga mimivirus (APMV).